We begin with the raw amino-acid sequence, 141 residues long: Hemoglobin subunit alpha (141 aa).

The 141-residue stretch at 1 to 141 (VLSADDKANV…VSTVLTSKYR (141 aa)) folds into the Globin domain. A Phosphoserine modification is found at Ser3. An N6-succinyllysine mark is found at Lys7 and Lys11. Residue Lys16 is modified to N6-acetyllysine; alternate. An N6-succinyllysine; alternate modification is found at Lys16. The residue at position 24 (Tyr24) is a Phosphotyrosine. Ser35 carries the phosphoserine modification. At Lys40 the chain carries N6-succinyllysine. Ser49 is subject to Phosphoserine. O2 is bound at residue His58. His87 contacts heme b. Ser102 bears the Phosphoserine mark. Thr108 is subject to Phosphothreonine. A phosphoserine mark is found at Ser124 and Ser131. Thr134 and Thr137 each carry phosphothreonine. Ser138 is subject to Phosphoserine.

This sequence belongs to the globin family. As to quaternary structure, heterotetramer of two alpha chains and two beta chains. In terms of tissue distribution, red blood cells.

Functionally, involved in oxygen transport from the lung to the various peripheral tissues. In Peromyscus californicus (California mouse), this protein is Hemoglobin subunit alpha.